The sequence spans 425 residues: 2-oxoglutarate and iron-dependent oxygenase JMJD4 (425 aa).

The 160-residue stretch at 141–300 (SRAFPEQDVY…IMWCFLQDEL (160 aa)) folds into the JmjC domain. Fe cation-binding residues include His188, Asp190, and His268.

It belongs to the JMJD6 family. Fe(2+) serves as cofactor.

The protein localises to the cytoplasm. It catalyses the reaction L-lysyl-[protein] + 2-oxoglutarate + O2 = 4-hydroxy-L-lysyl-[protein] + succinate + CO2. Catalyzes the 2-oxoglutarate and iron-dependent C4-lysyl hydroxylation of ETF1 at 'Lys-63' thereby promoting the translational termination efficiency of ETF1. The sequence is that of 2-oxoglutarate and iron-dependent oxygenase JMJD4 (JMJD4) from Gallus gallus (Chicken).